Consider the following 312-residue polypeptide: R2-like ligand binding oxidase (312 aa).

Residues E68, E101, and H104 each coordinate Mn(2+). Residues 71–162 constitute a cross-link (3-(O4'-tyrosyl)-valine (Val-Tyr)); it reads VTQDIQPFMA…AAQVRASVTY (92 aa). E101 contributes to the Fe cation binding site. Fe cation contacts are provided by E167, E202, and H205.

This sequence belongs to the ribonucleoside diphosphate reductase small chain family. R2-like ligand binding oxidase subfamily. As to quaternary structure, homodimer. It depends on Fe cation as a cofactor. Mn(2+) is required as a cofactor.

Its function is as follows. Probable oxidase that might be involved in lipid metabolism. This chain is R2-like ligand binding oxidase, found in Mycolicibacterium vanbaalenii (strain DSM 7251 / JCM 13017 / BCRC 16820 / KCTC 9966 / NRRL B-24157 / PYR-1) (Mycobacterium vanbaalenii).